The chain runs to 101 residues: Small ribosomal subunit protein uS14 (101 aa).

This sequence belongs to the universal ribosomal protein uS14 family. In terms of assembly, part of the 30S ribosomal subunit. Contacts proteins S3 and S10.

In terms of biological role, binds 16S rRNA, required for the assembly of 30S particles and may also be responsible for determining the conformation of the 16S rRNA at the A site. This is Small ribosomal subunit protein uS14 from Pseudoalteromonas translucida (strain TAC 125).